The primary structure comprises 189 residues: dCTP deaminase, dUMP-forming (189 aa).

Residues 101–106 (KSSLGR), D119, 127–129 (TLE), Q148, Y162, and Q174 contribute to the dCTP site. Catalysis depends on E129, which acts as the Proton donor/acceptor. The disordered stretch occupies residues 163 to 189 (GSSEAGSKYQGQRGPTPSKAYLNFNRS).

This sequence belongs to the dCTP deaminase family. As to quaternary structure, homotrimer.

It carries out the reaction dCTP + 2 H2O = dUMP + NH4(+) + diphosphate. Its pathway is pyrimidine metabolism; dUMP biosynthesis; dUMP from dCTP: step 1/1. Bifunctional enzyme that catalyzes both the deamination of dCTP to dUTP and the hydrolysis of dUTP to dUMP without releasing the toxic dUTP intermediate. This is dCTP deaminase, dUMP-forming from Rhodococcus erythropolis (strain PR4 / NBRC 100887).